The sequence spans 234 residues: Sugar fermentation stimulation protein A (234 aa).

A DNA-binding region (H-T-H motif) is located at residues 201-220 (LLSEAQNKGVEVLAYKAELS).

Belongs to the SfsA family.

Binds to DNA non-specifically. Could be a regulatory factor involved in maltose metabolism. This Salmonella gallinarum (strain 287/91 / NCTC 13346) protein is Sugar fermentation stimulation protein A.